A 156-amino-acid chain; its full sequence is Small ribosomal subunit protein uS7 (156 aa).

This sequence belongs to the universal ribosomal protein uS7 family. Part of the 30S ribosomal subunit. Contacts proteins S9 and S11.

In terms of biological role, one of the primary rRNA binding proteins, it binds directly to 16S rRNA where it nucleates assembly of the head domain of the 30S subunit. Is located at the subunit interface close to the decoding center, probably blocks exit of the E-site tRNA. In Hamiltonella defensa subsp. Acyrthosiphon pisum (strain 5AT), this protein is Small ribosomal subunit protein uS7.